Reading from the N-terminus, the 608-residue chain is UvrABC system protein C (608 aa).

In terms of domain architecture, GIY-YIG spans 13–91; the sequence is HDPGVYRMFD…IKTFQPRYNV (79 aa). A UVR domain is found at 201–236; the sequence is QQVLDHLIAKMETASRALDFENAARFRDQIQAVRAV.

This sequence belongs to the UvrC family. In terms of assembly, interacts with UvrB in an incision complex.

The protein localises to the cytoplasm. Functionally, the UvrABC repair system catalyzes the recognition and processing of DNA lesions. UvrC both incises the 5' and 3' sides of the lesion. The N-terminal half is responsible for the 3' incision and the C-terminal half is responsible for the 5' incision. The polypeptide is UvrABC system protein C (Actinobacillus succinogenes (strain ATCC 55618 / DSM 22257 / CCUG 43843 / 130Z)).